A 173-amino-acid polypeptide reads, in one-letter code: Protein-export protein SecB 1 (173 aa).

Belongs to the SecB family. Homotetramer, a dimer of dimers. One homotetramer interacts with 1 SecA dimer.

It is found in the cytoplasm. In terms of biological role, one of the proteins required for the normal export of preproteins out of the cell cytoplasm. It is a molecular chaperone that binds to a subset of precursor proteins, maintaining them in a translocation-competent state. It also specifically binds to its receptor SecA. The polypeptide is Protein-export protein SecB 1 (Gluconobacter oxydans (strain 621H) (Gluconobacter suboxydans)).